The sequence spans 136 residues: uncharacterized protein (136 aa).

Its subcellular location is the mitochondrion. This is an uncharacterized protein from Arabidopsis thaliana (Mouse-ear cress).